We begin with the raw amino-acid sequence, 595 residues long: Coronatine-insensitive protein homolog 1a (595 aa).

Positions Trp20–Val62 constitute an F-box domain. The jasmonate site is built by Arg90, Arg351, Tyr389, Arg412, and Arg499.

In terms of assembly, interacts with TIFY6A/JAZ3, TIFY6B/JAZ4 and TIFY11D/JAZ12 in a coronatine-dependent manner. Interacts with TIFY9/JAZ5, TIFY10A/JAZ6, TIFY10B/JAZ7, TIFY11A/JAZ9 and TIFY11C/JAZ11 in a coronatine-dependent manner.

Functionally, involved in jasmonate (JA) signaling. Required for jasmonate signaling in plant defense responses. Can complement Arabidopsis coi1-1 mutant and restore jasmonate signaling. Required for JA-regulated defense responses to infestation by the leaffolder Cnaphalocrocis medinalis. May act on an initial response of jasmonate-regulated gene expression toward drought tolerance as part of a BHLH148-TIFY11D/JAZ12-COI1A complex. Component of SCF(COI1) E3 ubiquitin ligase complexes, which may mediate the ubiquitination and subsequent proteasomal degradation of target proteins, including TIFY/JAZ family. This Oryza sativa subsp. indica (Rice) protein is Coronatine-insensitive protein homolog 1a.